Consider the following 468-residue polypeptide: Putative chitinase 1 (468 aa).

An N-terminal signal peptide occupies residues 1-21 (MDFYSSLLPFLILIYLEFCSG). A GH18 domain is found at 22–381 (FNRVCYYNGW…MSIIHGLGEY (360 aa)). The cysteines at positions 26 and 51 are disulfide-linked. Residues 73–74 (VF) and 100–103 (GGWD) contribute to the chitin site. Glutamate 143 serves as the catalytic Proton donor. Chitin contacts are provided by residues tyrosine 144, 213–216 (KMYD), and tryptophan 353. Positions 386 to 440 (SDTLEAEREMINKKIRKAAREISYYSDKGNSTMAKKMEDKLNQLKDHLSAVQAHQ) form a coiled coil.

Belongs to the glycosyl hydrolase 18 family. In terms of tissue distribution, prismatic layer of shell (at protein level). Expressed primarily in the mantle with highest level in the outer epithelium of the mantle edge and lower level in the mantle pallium.

It is found in the secreted. It carries out the reaction Random endo-hydrolysis of N-acetyl-beta-D-glucosaminide (1-&gt;4)-beta-linkages in chitin and chitodextrins.. The sequence is that of Putative chitinase 1 from Margaritifera margaritifera (Freshwater pearl mussel).